The following is a 1076-amino-acid chain: MLRNGNEGMSTIPGFSQIQFEGFCRFINQALAEELDKFPTIKDPDHEIAFQLFAKGYQLLEPSIKERDAVYESLTYSSELYVSARLIFGFDVQKQTISIGNIPIMNSLGTFIINGIYRIVINQILLSPGIYYRSELDHKGISIYTGTIISDWGGRSELAIDKKERIWARVSRKQKISILVLSSAMGSNLREILDNVSYPEIFLSFPNAKEKKRIESKEKAILEFYQQFACVGGDLVFSESLCEELQKKFFQQKCELGRIGRRNMNRRLNLDIPQNNTFLLPRDVLAATDHLIGMKFGTGILDDDDMNHLKNKRIRSVADLLQDQFGLALGRLQHAVQKTIRRVFIRQSKPTPQTLVTPTSTSILLITTYETFFGTYPLSQVFDQTNPLTQTVHGRKVSCLGPGGLTGRTASFRSRDIHPSHYGRICPIDTSEGINVGLTGSLAIHARIDHLWGSIESPFYEISAEKAKEKKERQVVYLSPNRDEYYMIAAGNSLSLNQGIQEEQVVPARYRQEFLTIAWEQIHVRSIFPFQYFSIGGSLIPFIEHNDANRALMSSNMQRQAVPLSRSEKCIVGTGLERQTALDSRVSIIAEREGKIISTDSHKILLSSSGKTISIPLVNHRRSNKNTCMHQKPRVPRGKSIKKGQILAEGAATVGGELALGKNVLVAYMPWEGYNFEDAVLISERLVYEDIYTSFHIRKYEIQTDTTSQGSAEKITKEIPHLEEHLLRNLDRNGVVRLGSWVETGDILVGKLTPQIASESSYIAEAGLLRAIFGLEVSTSKETSLKLPIGGRGRVIDVKWIQRDPLDIMVRVYILQKREIKVGDKVAGRHGNKGIISKILPRQDMPYLQDGTPVDMVFNPLGVPSRMNVGQIFESSLGLAGDLLKKHYRIAPFDERYEQEASRKLVFSELYEASKETKNPWVFEPEYPGKSRIFDGRTGDPFEQPVLIGKSYILKLIHQVDEKIHGRSTGPYSLVTQQPVRGRAKQGGQRVGEMEVWALEGFGVAHILQEILTYKSDHLIARQEILNATIWGKRIPNHEDPPESFRVLVRELRSLALELNHFLVSEKNFQVNREEV.

It belongs to the RNA polymerase beta chain family. In plastids the minimal PEP RNA polymerase catalytic core is composed of four subunits: alpha, beta, beta', and beta''. When a (nuclear-encoded) sigma factor is associated with the core the holoenzyme is formed, which can initiate transcription.

It is found in the plastid. It localises to the chloroplast. The enzyme catalyses RNA(n) + a ribonucleoside 5'-triphosphate = RNA(n+1) + diphosphate. DNA-dependent RNA polymerase catalyzes the transcription of DNA into RNA using the four ribonucleoside triphosphates as substrates. This is DNA-directed RNA polymerase subunit beta from Triticum aestivum (Wheat).